The following is a 168-amino-acid chain: Regulatory protein RecX (168 aa).

This sequence belongs to the RecX family.

The protein localises to the cytoplasm. Its function is as follows. Modulates RecA activity. The protein is Regulatory protein RecX of Serratia proteamaculans (strain 568).